Reading from the N-terminus, the 469-residue chain is Putative multidrug resistance protein MdtD (469 aa).

A run of 13 helical transmembrane segments spans residues 8-28, 45-65, 68-88, 102-122, 134-154, 161-181, 191-211, 215-235, 263-283, 286-306, 338-358, 392-412, and 426-446; these read LWIV…VNTA, SVIV…GWLA, VGVK…SLLC, VIQG…VMKI, FVTL…GFLV, WIFL…LWLM, FDIS…LALD, GLGL…LALA, LIGS…TPVF, IGLG…IIGS, LSFP…VLFF, MVMQ…LGVF, and SAFL…ALIF.

Belongs to the major facilitator superfamily. TCR/Tet family.

It is found in the cell inner membrane. This is Putative multidrug resistance protein MdtD from Yersinia enterocolitica serotype O:8 / biotype 1B (strain NCTC 13174 / 8081).